Here is a 500-residue protein sequence, read N- to C-terminus: Aspartyl/glutamyl-tRNA(Asn/Gln) amidotransferase subunit B (500 aa).

Belongs to the GatB/GatE family. GatB subfamily. As to quaternary structure, heterotrimer of A, B and C subunits.

The enzyme catalyses L-glutamyl-tRNA(Gln) + L-glutamine + ATP + H2O = L-glutaminyl-tRNA(Gln) + L-glutamate + ADP + phosphate + H(+). The catalysed reaction is L-aspartyl-tRNA(Asn) + L-glutamine + ATP + H2O = L-asparaginyl-tRNA(Asn) + L-glutamate + ADP + phosphate + 2 H(+). Functionally, allows the formation of correctly charged Asn-tRNA(Asn) or Gln-tRNA(Gln) through the transamidation of misacylated Asp-tRNA(Asn) or Glu-tRNA(Gln) in organisms which lack either or both of asparaginyl-tRNA or glutaminyl-tRNA synthetases. The reaction takes place in the presence of glutamine and ATP through an activated phospho-Asp-tRNA(Asn) or phospho-Glu-tRNA(Gln). This is Aspartyl/glutamyl-tRNA(Asn/Gln) amidotransferase subunit B from Thermosynechococcus vestitus (strain NIES-2133 / IAM M-273 / BP-1).